The following is a 241-amino-acid chain: Ribonuclease PH (241 aa).

Phosphate is bound by residues Arg89 and 127-129 (GTR).

The protein belongs to the RNase PH family. In terms of assembly, homohexameric ring arranged as a trimer of dimers.

The enzyme catalyses tRNA(n+1) + phosphate = tRNA(n) + a ribonucleoside 5'-diphosphate. In terms of biological role, phosphorolytic 3'-5' exoribonuclease that plays an important role in tRNA 3'-end maturation. Removes nucleotide residues following the 3'-CCA terminus of tRNAs; can also add nucleotides to the ends of RNA molecules by using nucleoside diphosphates as substrates, but this may not be physiologically important. Probably plays a role in initiation of 16S rRNA degradation (leading to ribosome degradation) during starvation. This Xanthomonas campestris pv. campestris (strain 8004) protein is Ribonuclease PH.